We begin with the raw amino-acid sequence, 198 residues long: Probable GTP-binding protein EngB (198 aa).

An EngB-type G domain is found at 22–195; it reads NRNEVAFVGR…IDKLFLEFAT (174 aa). Residues 30–37, 57–61, 75–78, 142–145, and 174–176 contribute to the GTP site; these read GRSNVGKS, GKTRL, DLPG, TKSD, and YSS. The Mg(2+) site is built by S37 and T59.

Belongs to the TRAFAC class TrmE-Era-EngA-EngB-Septin-like GTPase superfamily. EngB GTPase family. Requires Mg(2+) as cofactor.

Necessary for normal cell division and for the maintenance of normal septation. In Clostridium botulinum (strain Alaska E43 / Type E3), this protein is Probable GTP-binding protein EngB.